We begin with the raw amino-acid sequence, 68 residues long: Large ribosomal subunit protein bL33c (68 aa).

It belongs to the bacterial ribosomal protein bL33 family.

Its subcellular location is the plastid. The protein resides in the chloroplast. This is Large ribosomal subunit protein bL33c from Amborella trichopoda.